Consider the following 209-residue polypeptide: Ribonuclease HII (209 aa).

The 192-residue stretch at 18–209 (GLIAGVDEVG…FKPVKALLEG (192 aa)) folds into the RNase H type-2 domain. A divalent metal cation-binding residues include D24, E25, and D116.

The protein belongs to the RNase HII family. Requires Mn(2+) as cofactor. The cofactor is Mg(2+).

The protein resides in the cytoplasm. The enzyme catalyses Endonucleolytic cleavage to 5'-phosphomonoester.. Functionally, endonuclease that specifically degrades the RNA of RNA-DNA hybrids. The polypeptide is Ribonuclease HII (Shewanella putrefaciens (strain CN-32 / ATCC BAA-453)).